The following is an 81-amino-acid chain: ATP synthase subunit c, chloroplastic (81 aa).

The next 2 membrane-spanning stretches (helical) occupy residues 3–23 (PLIS…ASIG) and 53–73 (LLLS…VALA).

Belongs to the ATPase C chain family. In terms of assembly, F-type ATPases have 2 components, F(1) - the catalytic core - and F(0) - the membrane proton channel. F(1) has five subunits: alpha(3), beta(3), gamma(1), delta(1), epsilon(1). F(0) has four main subunits: a(1), b(1), b'(1) and c(10-14). The alpha and beta chains form an alternating ring which encloses part of the gamma chain. F(1) is attached to F(0) by a central stalk formed by the gamma and epsilon chains, while a peripheral stalk is formed by the delta, b and b' chains.

The protein localises to the plastid. Its subcellular location is the chloroplast thylakoid membrane. F(1)F(0) ATP synthase produces ATP from ADP in the presence of a proton or sodium gradient. F-type ATPases consist of two structural domains, F(1) containing the extramembraneous catalytic core and F(0) containing the membrane proton channel, linked together by a central stalk and a peripheral stalk. During catalysis, ATP synthesis in the catalytic domain of F(1) is coupled via a rotary mechanism of the central stalk subunits to proton translocation. Functionally, key component of the F(0) channel; it plays a direct role in translocation across the membrane. A homomeric c-ring of between 10-14 subunits forms the central stalk rotor element with the F(1) delta and epsilon subunits. The chain is ATP synthase subunit c, chloroplastic from Angiopteris evecta (Mule's foot fern).